Here is a 344-residue protein sequence, read N- to C-terminus: Glycerol-3-phosphate dehydrogenase [NAD(P)+] (344 aa).

The NADPH site is built by Ser-11, Trp-12, His-32, Arg-33, and Lys-105. The sn-glycerol 3-phosphate site is built by Lys-105, Gly-135, and Ser-137. Ala-139 lines the NADPH pocket. Sn-glycerol 3-phosphate is bound by residues Lys-190, Asp-243, Ser-253, Arg-254, and Asn-255. Lys-190 acts as the Proton acceptor in catalysis. Position 254 (Arg-254) interacts with NADPH. Val-278 and Glu-280 together coordinate NADPH.

This sequence belongs to the NAD-dependent glycerol-3-phosphate dehydrogenase family.

Its subcellular location is the cytoplasm. The catalysed reaction is sn-glycerol 3-phosphate + NAD(+) = dihydroxyacetone phosphate + NADH + H(+). The enzyme catalyses sn-glycerol 3-phosphate + NADP(+) = dihydroxyacetone phosphate + NADPH + H(+). The protein operates within membrane lipid metabolism; glycerophospholipid metabolism. In terms of biological role, catalyzes the reduction of the glycolytic intermediate dihydroxyacetone phosphate (DHAP) to sn-glycerol 3-phosphate (G3P), the key precursor for phospholipid synthesis. This is Glycerol-3-phosphate dehydrogenase [NAD(P)+] from Oceanobacillus iheyensis (strain DSM 14371 / CIP 107618 / JCM 11309 / KCTC 3954 / HTE831).